We begin with the raw amino-acid sequence, 229 residues long: MEFKVLDKGFLRLVDILGDDYSAVKAARVSYGKGIKTPEKDKNLIFYLMEHKHETPFEHIVFTFHVKTPIFVARQWFRHRIGSFNEASLRYTELKDEFYLPDHIRKNIVEDKQKAVRVEELKLKEQALELIYNSIEDSYKVYRKLLELGVAREMARIVLPMSSYTQFYWTVNARSLMNFLNLRADSHAQWEIQQYAIKIAKIFKEKCPWTFESFLKFNYRGDILREVEL.

A ThyX domain is found at 1 to 217 (MEFKVLDKGF…PWTFESFLKF (217 aa)). Residues Thr-55, 78–80 (RHR), and Glu-86 each bind FAD. Residues 75-78 (QWFR), 86-90 (EASLR), and Arg-156 contribute to the dUMP site. Residues 78-88 (RHRIGSFNEAS) carry the ThyX motif motif. FAD is bound by residues 172–174 (NAR) and Asn-178. Arg-183 is a binding site for dUMP. Arg-183 (involved in ionization of N3 of dUMP, leading to its activation) is an active-site residue.

Belongs to the thymidylate synthase ThyX family. In terms of assembly, homotetramer. Requires FAD as cofactor.

The enzyme catalyses dUMP + (6R)-5,10-methylene-5,6,7,8-tetrahydrofolate + NADPH + H(+) = dTMP + (6S)-5,6,7,8-tetrahydrofolate + NADP(+). It functions in the pathway pyrimidine metabolism; dTTP biosynthesis. Its function is as follows. Catalyzes the reductive methylation of 2'-deoxyuridine-5'-monophosphate (dUMP) to 2'-deoxythymidine-5'-monophosphate (dTMP) while utilizing 5,10-methylenetetrahydrofolate (mTHF) as the methyl donor, and NADPH and FADH(2) as the reductant. This chain is Flavin-dependent thymidylate synthase, found in Thermosipho melanesiensis (strain DSM 12029 / CIP 104789 / BI429).